The sequence spans 121 residues: Small ribosomal subunit protein uS13 (121 aa).

Positions 91–121 are disordered; the sequence is HRRGLPVRGQKTKNNARTRKGPVKTVANKKK.

The protein belongs to the universal ribosomal protein uS13 family. In terms of assembly, part of the 30S ribosomal subunit. Forms a loose heterodimer with protein S19. Forms two bridges to the 50S subunit in the 70S ribosome.

Functionally, located at the top of the head of the 30S subunit, it contacts several helices of the 16S rRNA. In the 70S ribosome it contacts the 23S rRNA (bridge B1a) and protein L5 of the 50S subunit (bridge B1b), connecting the 2 subunits; these bridges are implicated in subunit movement. Contacts the tRNAs in the A and P-sites. In Staphylococcus epidermidis (strain ATCC 35984 / DSM 28319 / BCRC 17069 / CCUG 31568 / BM 3577 / RP62A), this protein is Small ribosomal subunit protein uS13.